The sequence spans 441 residues: Glutamate--tRNA ligase 2 (441 aa).

The short motif at 8–18 (PSPTGYIHVGN) is the 'HIGH' region element. Residues 239–243 (ALSKR) carry the 'KMSKS' region motif. Lys242 is an ATP binding site.

This sequence belongs to the class-I aminoacyl-tRNA synthetase family. Glutamate--tRNA ligase type 1 subfamily. In terms of assembly, monomer.

The protein localises to the cytoplasm. It carries out the reaction tRNA(Glu) + L-glutamate + ATP = L-glutamyl-tRNA(Glu) + AMP + diphosphate. Catalyzes the attachment of glutamate to tRNA(Glu) in a two-step reaction: glutamate is first activated by ATP to form Glu-AMP and then transferred to the acceptor end of tRNA(Glu). This chain is Glutamate--tRNA ligase 2, found in Ruegeria sp. (strain TM1040) (Silicibacter sp.).